The following is a 332-amino-acid chain: dTDP-3,4-didehydro-2,6-dideoxy-alpha-D-glucose 3-reductase (332 aa).

12 to 18 provides a ligand contact to NADP(+); it reads CASFAWR. Arg-19 contributes to the substrate binding site. NADP(+)-binding positions include 37–38, Tyr-58, Leu-74, and His-79; that span reads SR. The active-site Proton donor is Lys-97. The NADP(+) site is built by Arg-165 and Asp-177. Residues Tyr-235 and Thr-255 each contribute to the substrate site.

The protein belongs to the Gfo/Idh/MocA family. As to quaternary structure, monomer.

It catalyses the reaction dTDP-4-dehydro-2,6-dideoxy-alpha-D-glucose + NADP(+) = dTDP-3,4-didehydro-2,6-dideoxy-alpha-D-glucose + NADPH + H(+). Involved in the biosynthesis of forosamine ((4-dimethylamino)-2,3,4,6-tetradeoxy-alpha-D-threo-hexopyranose), a highly deoxygenated sugar component of several bioactive natural products such as the insecticidal spinosyns A and D. Catalyzes the reduction of the C-3 keto moiety of dTDP-3,4-diketo-2,6-dideoxy-alpha-D-glucose to yield dTDP-4-keto-2,6-dideoxy-alpha-D-glucose. NADPH is the better reductant, however NADH can also be used. The polypeptide is dTDP-3,4-didehydro-2,6-dideoxy-alpha-D-glucose 3-reductase (Saccharopolyspora spinosa).